Consider the following 86-residue polypeptide: Small ribosomal subunit protein bS20 (86 aa).

The disordered stretch occupies residues 1-25 (MANIKSQIKRNKQNEKRHERNKAVK). Residues 12–22 (KQNEKRHERNK) are compositionally biased toward basic and acidic residues.

The protein belongs to the bacterial ribosomal protein bS20 family.

Its function is as follows. Binds directly to 16S ribosomal RNA. The protein is Small ribosomal subunit protein bS20 of Nocardioides sp. (strain ATCC BAA-499 / JS614).